Here is a 376-residue protein sequence, read N- to C-terminus: Gibberellin 20 oxidase 4 (376 aa).

The Fe2OG dioxygenase domain maps to 222–322 (DNESIFRLNY…RKTLAFFLCP (101 aa)). His-247, Asp-249, and His-303 together coordinate Fe cation. Arg-313 is an active-site residue.

It belongs to the iron/ascorbate-dependent oxidoreductase family. GA20OX subfamily. Fe(2+) serves as cofactor. It depends on L-ascorbate as a cofactor. In terms of tissue distribution, expressed in roots. Detected in leaves, inflorescences and siliques, but not in stems and dry seeds.

It catalyses the reaction gibberellin A12 + 2 2-oxoglutarate + 3 O2 + H(+) = gibberellin A9 + 2 succinate + 3 CO2 + 2 H2O. The enzyme catalyses gibberellin A53 + 2 2-oxoglutarate + 3 O2 + H(+) = gibberellin A20 + 2 succinate + 3 CO2 + 2 H2O. The protein operates within plant hormone biosynthesis; gibberellin biosynthesis. Functionally, key oxidase enzyme in the biosynthesis of gibberellin that catalyzes the conversion of GA12 and GA53 to GA9 and GA20 respectively, via a three-step oxidation at C-20 of the GA skeleton. In Arabidopsis thaliana (Mouse-ear cress), this protein is Gibberellin 20 oxidase 4 (GA20OX4).